A 304-amino-acid polypeptide reads, in one-letter code: Type II methyltransferase M.HindV (304 aa).

The SAM-dependent MTase C5-type domain maps to 1–299; the sequence is MKCVDLFSGC…SAIINFEKEP (299 aa). Residue Cys-75 is part of the active site.

Belongs to the class I-like SAM-binding methyltransferase superfamily. C5-methyltransferase family.

The catalysed reaction is a 2'-deoxycytidine in DNA + S-adenosyl-L-methionine = a 5-methyl-2'-deoxycytidine in DNA + S-adenosyl-L-homocysteine + H(+). A methylase, recognizes the double-stranded sequence 5'-GRCGYC-3', methylates C-? on both strands, and protects the DNA from cleavage by the HindV endonuclease. The polypeptide is Type II methyltransferase M.HindV (hindVM) (Haemophilus influenzae (strain ATCC 51907 / DSM 11121 / KW20 / Rd)).